We begin with the raw amino-acid sequence, 175 residues long: ATP synthase subunit b, chloroplastic (175 aa).

Residues 26–44 traverse the membrane as a helical segment; sequence VINLAVVIGVVVSFVGDAV.

This sequence belongs to the ATPase B chain family. F-type ATPases have 2 components, F(1) - the catalytic core - and F(0) - the membrane proton channel. F(1) has five subunits: alpha(3), beta(3), gamma(1), delta(1), epsilon(1). F(0) has four main subunits: a(1), b(1), b'(1) and c(10-14). The alpha and beta chains form an alternating ring which encloses part of the gamma chain. F(1) is attached to F(0) by a central stalk formed by the gamma and epsilon chains, while a peripheral stalk is formed by the delta, b and b' chains.

It is found in the plastid. The protein resides in the chloroplast thylakoid membrane. F(1)F(0) ATP synthase produces ATP from ADP in the presence of a proton or sodium gradient. F-type ATPases consist of two structural domains, F(1) containing the extramembraneous catalytic core and F(0) containing the membrane proton channel, linked together by a central stalk and a peripheral stalk. During catalysis, ATP synthesis in the catalytic domain of F(1) is coupled via a rotary mechanism of the central stalk subunits to proton translocation. In terms of biological role, component of the F(0) channel, it forms part of the peripheral stalk, linking F(1) to F(0). The polypeptide is ATP synthase subunit b, chloroplastic (Tupiella akineta (Green alga)).